Consider the following 957-residue polypeptide: Bifunctional glutamine synthetase adenylyltransferase/adenylyl-removing enzyme (957 aa).

The segment at 1 to 449 is adenylyl removase; sequence MTQHLERPEL…VFDDIIGTDE (449 aa). An adenylyl transferase region spans residues 457-957; the sequence is SEQYNEMWTM…QEYLVPSSDE (501 aa).

This sequence belongs to the GlnE family. The cofactor is Mg(2+).

The catalysed reaction is [glutamine synthetase]-O(4)-(5'-adenylyl)-L-tyrosine + phosphate = [glutamine synthetase]-L-tyrosine + ADP. It carries out the reaction [glutamine synthetase]-L-tyrosine + ATP = [glutamine synthetase]-O(4)-(5'-adenylyl)-L-tyrosine + diphosphate. Functionally, involved in the regulation of glutamine synthetase GlnA, a key enzyme in the process to assimilate ammonia. When cellular nitrogen levels are high, the C-terminal adenylyl transferase (AT) inactivates GlnA by covalent transfer of an adenylyl group from ATP to specific tyrosine residue of GlnA, thus reducing its activity. Conversely, when nitrogen levels are low, the N-terminal adenylyl removase (AR) activates GlnA by removing the adenylyl group by phosphorolysis, increasing its activity. The regulatory region of GlnE binds the signal transduction protein PII (GlnB) which indicates the nitrogen status of the cell. The sequence is that of Bifunctional glutamine synthetase adenylyltransferase/adenylyl-removing enzyme from Photobacterium profundum (strain SS9).